Reading from the N-terminus, the 88-residue chain is MDGFDKTMKFSIQDEKQSVHVNDVLLTVYDALQEKGYNPINQIVGYLLSGDPAYIPRHKDARSIIRKLERDELIEELVKSYLKHHREE.

Belongs to the UPF0297 family.

The polypeptide is UPF0297 protein BT9727_4120 (Bacillus thuringiensis subsp. konkukian (strain 97-27)).